Consider the following 291-residue polypeptide: Verruculogen synthase (291 aa).

The active site involves Tyr68.

This sequence belongs to the PhyH family. In terms of assembly, homodimer. The cofactor is Fe cation.

It carries out the reaction fumitremorgin B + 2-oxoglutarate + AH2 + 2 O2 = verruculogen + succinate + A + CO2 + H2O. It participates in mycotoxin biosynthesis. Its function is as follows. Verruculogen synthase; part of the gene cluster that mediates the biosynthesis of fumitremorgins, indole alkaloids that carry not only intriguing chemical structures, but also interesting biological and pharmacological activities. The biosynthesis of fumitremorgin-type alkaloids begins by condensation of the two amino acids L-tryptophan and L-proline to brevianamide F, catalyzed by the non-ribosomal peptide synthetase ftmA. Brevianamide F is then prenylated by the prenyltransferase ftmPT1/ftmB in the presence of dimethylallyl diphosphate, resulting in the formation of tryprostatin B. The three cytochrome P450 monooxygenases, ftmP450-1/ftmC, ftmP450-2/ftmE and ftmP450-3/FtmG, are responsible for the conversion of tryprostatin B to 6-hydroxytryprostatin B, tryprostatin A to fumitremorgin C and fumitremorgin C to 12,13-dihydroxyfumitremorgin C, respectively. The putative methyltransferase ftmMT/ftmD is expected for the conversion of 6-hydroxytryprostatin B to tryprostatin A. FtmPT2/FtmH catalyzes the prenylation of 12,13-dihydroxyfumitre-morgin C in the presence of dimethylallyl diphosphate, resulting in the formation of fumitremorgin B. Fumitremorgin B is further converted to verruculogen by ftmOx1/ftmF via the insertion of an endoperoxide bond between the two prenyl moieties. In some fungal species, verruculogen is further converted to fumitremorgin A, but the enzymes involved in this step have not been identified yet. In Aspergillus fumigatus (strain ATCC MYA-4609 / CBS 101355 / FGSC A1100 / Af293) (Neosartorya fumigata), this protein is Verruculogen synthase.